Here is a 306-residue protein sequence, read N- to C-terminus: Elongation factor Ts (306 aa).

The interval 79–82 (TDFV) is involved in Mg(2+) ion dislocation from EF-Tu.

Belongs to the EF-Ts family.

It is found in the cytoplasm. Its function is as follows. Associates with the EF-Tu.GDP complex and induces the exchange of GDP to GTP. It remains bound to the aminoacyl-tRNA.EF-Tu.GTP complex up to the GTP hydrolysis stage on the ribosome. The polypeptide is Elongation factor Ts (Mesorhizobium japonicum (strain LMG 29417 / CECT 9101 / MAFF 303099) (Mesorhizobium loti (strain MAFF 303099))).